Reading from the N-terminus, the 724-residue chain is Cyclin-T1 (724 aa).

Residue S117 is modified to Phosphoserine. Positions 253-270 match the Nuclear localization signal motif; that stretch reads KRIRNWRAYQAAMKTKPD. Residue K342 forms a Glycyl lysine isopeptide (Lys-Gly) (interchain with G-Cter in SUMO2) linkage. A coiled-coil region spans residues 384–425; that stretch reads SAKVSLKEYRAKHAEELAAQKRQLENMEANVKSQYAYAAQNL. S388 carries the post-translational modification Phosphoserine. K390 is subject to N6-acetyllysine. Residue K415 forms a Glycyl lysine isopeptide (Lys-Gly) (interchain with G-Cter in SUMO2) linkage. S416, S473, and S474 each carry ADP-ribosylserine. Residues 479 to 549 are histidine-rich domain (HRD); it reads IKMRIKVHSA…RPSDPKHSSQ (71 aa). K480 is covalently cross-linked (Glycyl lysine isopeptide (Lys-Gly) (interchain with G-Cter in SUMO2)). Basic and acidic residues predominate over residues 483 to 507; sequence IKVHSAGDKHNSIEDSVTKSREHKE. Disordered regions lie at residues 483-586 and 691-724; these read IKVH…VFDH and PRAGAISSRSGTTDKPRPPPLPSEPPPPLPPLPK. Residue K484 is modified to N6-(ADP-ribosyl)lysine. An ADP-ribosylhistidine modification is found at H486. S494 and S498 each carry phosphoserine. Basic residues predominate over residues 508–529; the sequence is KQRTHPSNHHHHHNHHSHRHSH. Residue H529 is modified to ADP-ribosylhistidine. An ADP-ribosylserine mark is found at S548 and S551. The residue at position 555 (H555) is an ADP-ribosylhistidine. The segment covering 559-569 has biased composition (low complexity); the sequence is SLSSTLSSSSS. At S562 the chain carries ADP-ribosylserine. Positions 708–724 are enriched in pro residues; it reads PPPLPSEPPPPLPPLPK.

The protein belongs to the cyclin family. Cyclin C subfamily. In terms of assembly, cyclin-T1 is the predominant cyclin that associates with CDK9 to form a heterodimer called P-TEFb. P-TEFb forms a complex with AFF4/AF5Q31. Component of a complex which is at least composed of HTATSF1/Tat-SF1, P-TEFb complex, RNA pol II, SUPT5H, and NCL/nucleolin. Component of the 7SK snRNP complex at least composed of P-TEFb (composed of CDK9 and CCNT1/cyclin-T1), HEXIM1, HEXIM2, BCDIN3, SART3 proteins and 7SK and U6 snRNAs. Interacts (via central region) with ZMYND8 (via N-terminus); the interaction is direct and the association appears to occur between homodimeric ZMYND8 and the activated form of the P-TEFb complex. Interacts with BRD4, targets chromatin binding. Interacts with JMJD6. Interacts with MDFIC. Interacts with HSF1. Interacts with HTATSF1. Interacts with TBX21. ADP-ribosylation on serine residues by PARP1 in response to DNA damage disrupts the phase separation activity of CCNT1, thereby preventing activation of CDK9.

The protein resides in the nucleus. Regulatory subunit of the cyclin-dependent kinase pair (CDK9/cyclin-T1) complex, also called positive transcription elongation factor B (P-TEFb), which facilitates the transition from abortive to productive elongation by phosphorylating the CTD (C-terminal domain) of the large subunit of RNA polymerase II (RNA Pol II). Required to activate the protein kinase activity of CDK9: acts by mediating formation of liquid-liquid phase separation (LLPS) that enhances binding of P-TEFb to the CTD of RNA Pol II. This is Cyclin-T1 (Ccnt1) from Mus musculus (Mouse).